A 218-amino-acid polypeptide reads, in one-letter code: Molybdenum cofactor guanylyltransferase (218 aa).

GTP is bound by residues 16–18 (LAG), K28, N56, D74, and D109. D109 contacts Mg(2+).

The protein belongs to the MobA family. In terms of assembly, monomer. It depends on Mg(2+) as a cofactor.

It is found in the cytoplasm. It carries out the reaction Mo-molybdopterin + GTP + H(+) = Mo-molybdopterin guanine dinucleotide + diphosphate. In terms of biological role, transfers a GMP moiety from GTP to Mo-molybdopterin (Mo-MPT) cofactor (Moco or molybdenum cofactor) to form Mo-molybdopterin guanine dinucleotide (Mo-MGD) cofactor. The protein is Molybdenum cofactor guanylyltransferase of Sinorhizobium fredii (strain NBRC 101917 / NGR234).